The chain runs to 169 residues: Peptide methionine sulfoxide reductase MsrA (169 aa).

Residue C13 is part of the active site.

This sequence belongs to the MsrA Met sulfoxide reductase family.

It carries out the reaction L-methionyl-[protein] + [thioredoxin]-disulfide + H2O = L-methionyl-(S)-S-oxide-[protein] + [thioredoxin]-dithiol. It catalyses the reaction [thioredoxin]-disulfide + L-methionine + H2O = L-methionine (S)-S-oxide + [thioredoxin]-dithiol. In terms of biological role, has an important function as a repair enzyme for proteins that have been inactivated by oxidation. Catalyzes the reversible oxidation-reduction of methionine sulfoxide in proteins to methionine. This chain is Peptide methionine sulfoxide reductase MsrA, found in Mycolicibacterium vanbaalenii (strain DSM 7251 / JCM 13017 / BCRC 16820 / KCTC 9966 / NRRL B-24157 / PYR-1) (Mycobacterium vanbaalenii).